The following is a 152-amino-acid chain: Plant UBX domain-containing protein 12 (152 aa).

A disordered region spans residues K32 to E61. The region spanning D67 to T150 is the UBX domain.

This is Plant UBX domain-containing protein 12 from Arabidopsis thaliana (Mouse-ear cress).